The chain runs to 331 residues: UBX domain-containing protein 2B (331 aa).

2 disordered regions span residues 1 to 26 (MAEGGGAEPEEQERRSSRPRPPSARD) and 38 to 63 (EMKCKSSKPDRSTATAFKSPRTPPLR). A2 is modified (N-acetylalanine). Residues 38 to 48 (EMKCKSSKPDR) show a composition bias toward basic and acidic residues. S56 is modified (phosphoserine). The residue at position 59 (T59) is a Phosphothreonine. At S66 the chain carries Phosphoserine. An SEP domain is found at 141-206 (DVQILLRLWS…MEDHQDQEYI (66 aa)). A phosphoserine mark is found at S231, S234, and S235. The region spanning 252-329 (DSVPTTKIQI…DILNTVILQQ (78 aa)) is the UBX domain.

Belongs to the NSFL1C family. In terms of assembly, interacts with VCP. Does not bind ubiquitin. In terms of tissue distribution, present at high level in brain. Also present in liver, kidney, spleen, testis, lung and heart (at protein level).

It localises to the nucleus. It is found in the cytoplasm. The protein localises to the cytosol. Its subcellular location is the endoplasmic reticulum. The protein resides in the golgi apparatus. It localises to the cytoskeleton. It is found in the microtubule organizing center. The protein localises to the centrosome. Functionally, adapter protein required for Golgi and endoplasmic reticulum biogenesis. Involved in Golgi and endoplasmic reticulum maintenance during interphase and in their reassembly at the end of mitosis. The complex formed with VCP has membrane fusion activity; membrane fusion activity requires USO1-GOLGA2 tethering and BET1L. VCPIP1 is also required, but not its deubiquitinating activity. Together with NSFL1C/p47, regulates the centrosomal levels of kinase AURKA/Aurora A during mitotic progression by promoting AURKA removal from centrosomes in prophase. Also, regulates spindle orientation during mitosis. This is UBX domain-containing protein 2B (Ubxn2b) from Rattus norvegicus (Rat).